A 234-amino-acid polypeptide reads, in one-letter code: Myelin protein zero-like protein 3 (234 aa).

A signal peptide spans 1 to 31 (MQQSGVPGSRGCALCPLLGVLFFQGVYVIFS). The region spanning 32-148 (LEIKADAHVR…NIPATELTVT (117 aa)) is the Ig-like V-type domain. The Extracellular segment spans residues 32–158 (LEIKADAHVR…ERGFGTMLSS (127 aa)). An intrachain disulfide couples Cys52 to Cys128. Residue Asn123 is glycosylated (N-linked (GlcNAc...) asparagine). The helical transmembrane segment at 159 to 179 (VALLSILVFIPSTVVVILLLV) threads the bilayer. Over 180-234 (RMGRKSAGLKKRSKSGYKKSSIEVSDDTDQEGDDCMAKLCVRCAECVDSDYEETY) the chain is Cytoplasmic.

Belongs to the myelin P0 protein family.

The protein resides in the membrane. Mediates homophilic cell-cell adhesion. This Bos taurus (Bovine) protein is Myelin protein zero-like protein 3 (MPZL3).